The following is a 321-amino-acid chain: tRNA(Ile)-lysidine synthase (321 aa).

Position 20-25 (20-25) interacts with ATP; it reads SGGADS.

It belongs to the tRNA(Ile)-lysidine synthase family.

The protein resides in the cytoplasm. The enzyme catalyses cytidine(34) in tRNA(Ile2) + L-lysine + ATP = lysidine(34) in tRNA(Ile2) + AMP + diphosphate + H(+). Its function is as follows. Ligates lysine onto the cytidine present at position 34 of the AUA codon-specific tRNA(Ile) that contains the anticodon CAU, in an ATP-dependent manner. Cytidine is converted to lysidine, thus changing the amino acid specificity of the tRNA from methionine to isoleucine. The chain is tRNA(Ile)-lysidine synthase from Bordetella pertussis (strain Tohama I / ATCC BAA-589 / NCTC 13251).